The primary structure comprises 505 residues: MNKKVILMILDGWGKSPDPKVSAIDNANIPFINSLYKNYPSAQLRTDGLNVGLPEGQMGNSEVGHMNLGAGRIVYQDLAKINLAVQNKTLSQEKALKEAFQYAKENNKPIHFLGLLSDGGVHSHTSHLRGLLDAAQNFGLKKTFIHAFTDGRDVDPKSAIATIENLNKYIHNTPAKLASVIGRYYAMDRDKRWERIKLAYDLLVNGKGKPSQDAVLSISNSYQNNITDEFIEPIIMTDDNNNPIATIQEDDVVIFFNFRTDRGRELTEALSQQDFHEQNMHKLNLYYVTLTNYDETYKNVKVIYNKDNITQTLGEVLEKAGKKQIRIAETEKYPHVTFFFSGGREQPFLGESRILKNSPKVATYDLQPEMSAYELTEALIPEIEKTEADFICLNFANGDMVGHTGIMSAAIKACQAVNKCVEKVITAALAHNYTTIVIADHGNCETMINPDGTPNTAHTTNPVPIILVDKELKTIHDGVLGDIAPTILDLMGIKKPEVMTRNSLL.

Mn(2+) is bound by residues aspartate 11 and serine 61. The active-site Phosphoserine intermediate is serine 61. Residues histidine 122, arginine 152 to aspartate 153, arginine 183, arginine 189, arginine 259 to arginine 262, and lysine 332 contribute to the substrate site. Residues aspartate 399, histidine 403, aspartate 440, histidine 441, and histidine 458 each coordinate Mn(2+).

The protein belongs to the BPG-independent phosphoglycerate mutase family. Monomer. Mn(2+) is required as a cofactor.

It catalyses the reaction (2R)-2-phosphoglycerate = (2R)-3-phosphoglycerate. It functions in the pathway carbohydrate degradation; glycolysis; pyruvate from D-glyceraldehyde 3-phosphate: step 3/5. In terms of biological role, catalyzes the interconversion of 2-phosphoglycerate and 3-phosphoglycerate. This chain is 2,3-bisphosphoglycerate-independent phosphoglycerate mutase, found in Flavobacterium psychrophilum (strain ATCC 49511 / DSM 21280 / CIP 103535 / JIP02/86).